We begin with the raw amino-acid sequence, 166 residues long: NAD(P)H-quinone oxidoreductase subunit I, chloroplastic (166 aa).

4Fe-4S ferredoxin-type domains lie at Gly55–Lys84 and Leu95–Glu124. Cys64, Cys67, Cys70, Cys74, Cys104, Cys107, Cys110, and Cys114 together coordinate [4Fe-4S] cluster.

Belongs to the complex I 23 kDa subunit family. As to quaternary structure, NDH is composed of at least 16 different subunits, 5 of which are encoded in the nucleus. The cofactor is [4Fe-4S] cluster.

The protein resides in the plastid. The protein localises to the chloroplast thylakoid membrane. The enzyme catalyses a plastoquinone + NADH + (n+1) H(+)(in) = a plastoquinol + NAD(+) + n H(+)(out). It carries out the reaction a plastoquinone + NADPH + (n+1) H(+)(in) = a plastoquinol + NADP(+) + n H(+)(out). In terms of biological role, NDH shuttles electrons from NAD(P)H:plastoquinone, via FMN and iron-sulfur (Fe-S) centers, to quinones in the photosynthetic chain and possibly in a chloroplast respiratory chain. The immediate electron acceptor for the enzyme in this species is believed to be plastoquinone. Couples the redox reaction to proton translocation, and thus conserves the redox energy in a proton gradient. This chain is NAD(P)H-quinone oxidoreductase subunit I, chloroplastic, found in Hofmeisteria fasciculata (Helogyne fasciculata).